A 377-amino-acid chain; its full sequence is Succinyl-diaminopimelate desuccinylase (377 aa).

Histidine 66 is a Zn(2+) binding site. The active site involves aspartate 68. Aspartate 99 serves as a coordination point for Zn(2+). Glutamate 133 (proton acceptor) is an active-site residue. Zn(2+) contacts are provided by glutamate 134, glutamate 162, and histidine 348.

Belongs to the peptidase M20A family. DapE subfamily. Homodimer. It depends on Zn(2+) as a cofactor. Requires Co(2+) as cofactor.

It catalyses the reaction N-succinyl-(2S,6S)-2,6-diaminopimelate + H2O = (2S,6S)-2,6-diaminopimelate + succinate. It functions in the pathway amino-acid biosynthesis; L-lysine biosynthesis via DAP pathway; LL-2,6-diaminopimelate from (S)-tetrahydrodipicolinate (succinylase route): step 3/3. Its function is as follows. Catalyzes the hydrolysis of N-succinyl-L,L-diaminopimelic acid (SDAP), forming succinate and LL-2,6-diaminopimelate (DAP), an intermediate involved in the bacterial biosynthesis of lysine and meso-diaminopimelic acid, an essential component of bacterial cell walls. The chain is Succinyl-diaminopimelate desuccinylase from Alcanivorax borkumensis (strain ATCC 700651 / DSM 11573 / NCIMB 13689 / SK2).